The following is a 126-amino-acid chain: Protein LLP homolog (126 aa).

The span at 1-21 shows a compositional bias: basic residues; it reads MAKSLRSKWRRKMRAEKRKKV. 2 disordered regions span residues 1 to 22 and 53 to 126; these read MAKS…KKVA and VPPE…RLAW. The span at 73 to 94 shows a compositional bias: basic and acidic residues; sequence DGGKMDLDTKRNKKTMLDEHGR. Over residues 103–126 the composition is skewed to basic residues; sequence QAKKLKAKRVGKNGKPKPKKRLAW.

Belongs to the learning-associated protein family.

The protein localises to the nucleus. Its subcellular location is the nucleolus. It is found in the chromosome. Functionally, regulates dendritic and spine growth and synaptic transmission. This Danio rerio (Zebrafish) protein is Protein LLP homolog (llph).